The primary structure comprises 892 residues: Translation initiation factor IF-2 (892 aa).

Residues 51-296 (REHGSAPNKL…KGKRKPSTLQ (246 aa)) are disordered. A compositionally biased stretch (polar residues) spans 68-82 (STLNIPSTGGKSKSV). Positions 99–217 (EQAKAEEQAQ…KMAAENEGKW (119 aa)) are enriched in basic and acidic residues. The segment covering 224 to 237 (QTESADYHVTTSQH) has biased composition (polar residues). Residues 239–254 (RAAEDENDAKVEGDRR) show a composition bias toward basic and acidic residues. Residues 255–269 (SRTRGGKATKQKKGN) are compositionally biased toward basic residues. Positions 270–283 (KLSESKADREEARA) are enriched in basic and acidic residues. A tr-type G domain is found at 391–560 (HRAPVVTIMG…LLQAEVMELK (170 aa)). Residues 400–407 (GHVDHGKT) are G1. Position 400–407 (400–407 (GHVDHGKT)) interacts with GTP. The tract at residues 425 to 429 (GITQH) is G2. Residues 446 to 449 (DTPG) are G3. GTP-binding positions include 446 to 450 (DTPGH) and 500 to 503 (NKID). Residues 500 to 503 (NKID) are G4. Residues 536-538 (SAK) are G5.

The protein belongs to the TRAFAC class translation factor GTPase superfamily. Classic translation factor GTPase family. IF-2 subfamily.

It is found in the cytoplasm. Its function is as follows. One of the essential components for the initiation of protein synthesis. Protects formylmethionyl-tRNA from spontaneous hydrolysis and promotes its binding to the 30S ribosomal subunits. Also involved in the hydrolysis of GTP during the formation of the 70S ribosomal complex. The chain is Translation initiation factor IF-2 from Yersinia enterocolitica serotype O:8 / biotype 1B (strain NCTC 13174 / 8081).